Here is a 629-residue protein sequence, read N- to C-terminus: Rho GTPase-activating protein conundrum (629 aa).

A required for interaction with Moe region spans residues 185–294; the sequence is PPKSGTYADI…CRDSSSLDSC (110 aa). A disordered region spans residues 237–261; the sequence is SIGRSKESRSENDARSQKKKSSEVL. Residues 240–258 are compositionally biased toward basic and acidic residues; sequence RSKESRSENDARSQKKKSS. Residues 359 to 565 form the Rho-GAP domain; that stretch reads VSINALIRRD…ILILRGEKLF (207 aa).

Interacts with Moe (via FERM domain).

The protein localises to the cytoplasm. The protein resides in the cell membrane. It is found in the cell cortex. Its subcellular location is the cell junction. Functionally, GTPase-activating protein (GAP) for Rho1; functions with the ERM protein Moe to regulate Rho1 and control proliferation in the developing epithelium. Recruited by Moe to the cell cortex where it negatively regulates Rho1 activity. Can also promote cell proliferation independently of its GAP activity, perhaps by acting with Arf6 to positively regulate Rac1. This Drosophila melanogaster (Fruit fly) protein is Rho GTPase-activating protein conundrum.